The chain runs to 246 residues: Pyridoxine 5'-phosphate synthase (246 aa).

A 3-amino-2-oxopropyl phosphate-binding site is contributed by Asn12. 14-15 provides a ligand contact to 1-deoxy-D-xylulose 5-phosphate; that stretch reads DH. Residue Arg23 participates in 3-amino-2-oxopropyl phosphate binding. His48 serves as the catalytic Proton acceptor. Residues Arg50 and His55 each coordinate 1-deoxy-D-xylulose 5-phosphate. Residue Glu75 is the Proton acceptor of the active site. A 1-deoxy-D-xylulose 5-phosphate-binding site is contributed by Thr105. His196 functions as the Proton donor in the catalytic mechanism. 3-amino-2-oxopropyl phosphate is bound by residues Gly197 and 218–219; that span reads GH.

It belongs to the PNP synthase family. In terms of assembly, homooctamer; tetramer of dimers.

Its subcellular location is the cytoplasm. The catalysed reaction is 3-amino-2-oxopropyl phosphate + 1-deoxy-D-xylulose 5-phosphate = pyridoxine 5'-phosphate + phosphate + 2 H2O + H(+). It participates in cofactor biosynthesis; pyridoxine 5'-phosphate biosynthesis; pyridoxine 5'-phosphate from D-erythrose 4-phosphate: step 5/5. Functionally, catalyzes the complicated ring closure reaction between the two acyclic compounds 1-deoxy-D-xylulose-5-phosphate (DXP) and 3-amino-2-oxopropyl phosphate (1-amino-acetone-3-phosphate or AAP) to form pyridoxine 5'-phosphate (PNP) and inorganic phosphate. The chain is Pyridoxine 5'-phosphate synthase from Thioalkalivibrio sulfidiphilus (strain HL-EbGR7).